Consider the following 420-residue polypeptide: COP9 signalosome complex subunit 5 (420 aa).

One can recognise an MPN domain in the interval 73-208 (AALSALACMK…IGAFRTMPET (136 aa)). Zn(2+) is bound by residues His154, His156, and Asp167. A JAMM motif motif is present at residues 154 to 167 (HSHPGYGCWLSGID).

This sequence belongs to the peptidase M67A family. CSN5 subfamily. As to quaternary structure, component of the COP9 signalosome (CSN) complex.

The protein resides in the cytoplasm. Its subcellular location is the nucleus. In terms of biological role, catalytic component of the COP9 signalosome (CSN) complex that acts as an regulator of the ubiquitin (Ubl) conjugation pathway by mediating the deneddylation of the cullin subunit of SCF-type E3 ubiquitin-protein ligase complexes. The CSN complex is involved in the regulation of the mating pheromone response. This is COP9 signalosome complex subunit 5 (RRI1) from Eremothecium gossypii (strain ATCC 10895 / CBS 109.51 / FGSC 9923 / NRRL Y-1056) (Yeast).